Reading from the N-terminus, the 60-residue chain is Large ribosomal subunit protein bL32 (60 aa).

The segment covering 1 to 20 has biased composition (basic residues); it reads MAVQKSRKSRSRRDMRRSHH. The interval 1 to 60 is disordered; it reads MAVQKSRKSRSRRDMRRSHHHMEVAELSIDATTGEKHRRHHMTKDGFYRGRQLFKASQED.

The protein belongs to the bacterial ribosomal protein bL32 family.

This is Large ribosomal subunit protein bL32 from Psychrobacter sp. (strain PRwf-1).